A 668-amino-acid chain; its full sequence is Metastasis-associated protein MTA2 (668 aa).

Residues 1–144 (MAANMYRVGD…PVQKTLLADQ (144 aa)) form the BAH domain. Ser-52 and Ser-54 each carry phosphoserine. Residues 145 to 256 (GEIRVGCKYQ…KAMSTLVPQG (112 aa)) enclose the ELM2 domain. Lys-152 carries the post-translational modification N6-acetyllysine. Residues 263-315 (DEMEEWSASEAMLFEEALEKYGKDFNDIRQDFLPWKSLASIVQFYYMWKTTDR) form the SANT domain. The segment at 367–394 (CESCHTTQSAQWYAWGPPNMQCRLCASC) adopts a GATA-type; atypical zinc-finger fold. Residues 409–419 (QLEGATRGTTE) are compositionally biased toward polar residues. Positions 409–437 (QLEGATRGTTEPHSRGHLSRPEAQSLSPY) are disordered. Residues Ser-433 and Ser-435 each carry the phosphoserine modification. Lys-460 is modified (N6-acetyllysine). Lys-492 is covalently cross-linked (Glycyl lysine isopeptide (Lys-Gly) (interchain with G-Cter in SUMO2 and SUMO3); alternate). Lys-492 participates in a covalent cross-link: Glycyl lysine isopeptide (Lys-Gly) (interchain with G-Cter in SUMO2); alternate. Lys-508 participates in a covalent cross-link: Glycyl lysine isopeptide (Lys-Gly) (interchain with G-Cter in SUMO2). N6-acetyllysine occurs at positions 522 and 531. Phosphothreonine is present on Thr-534. Ser-548 is modified (phosphoserine). Residues Lys-559 and Lys-595 each participate in a glycyl lysine isopeptide (Lys-Gly) (interchain with G-Cter in SUMO2) cross-link. Disordered regions lie at residues 580–599 (ASGI…LNPA) and 647–668 (PPVP…VLED).

The protein belongs to the metastasis-associated protein family. As to quaternary structure, component of the nucleosome remodeling and deacetylase (NuRD) repressor complex, composed of core proteins MTA1, MTA2, MTA3, RBBP4, RBBP7, HDAC1, HDAC2, MBD2, MBD3, and peripherally associated proteins CDK2AP1, CDK2AP2, GATAD2A, GATAD2B, CHD3, CHD4 and CHD5. The exact stoichiometry of the NuRD complex is unknown, and some subunits such as MBD2 and MBD3, GATAD2A and GATAD2B, and CHD3, CHD4 and CHD5 define mutually exclusive NuRD complexes. Interacts with CHD3. Interacts with CHD4. Interacts with GATAD2A. Interacts with HDAC7. Interacts with MBD3. Interacts with p53/TP53. Interacts with MINT. Interacts with PIMREG. Interacts with NACC2. Interacts with ERCC6. Interacts with PWWP2B. Interacts with transcription factor BCL11A. In terms of tissue distribution, widely expressed.

The protein localises to the nucleus. Functionally, may function as a transcriptional coregulator. Acts as a component of the histone deacetylase NuRD complex which participates in the remodeling of chromatin. This chain is Metastasis-associated protein MTA2 (MTA2), found in Homo sapiens (Human).